The sequence spans 217 residues: UPF0502 protein PFLU_2135 (217 aa).

Belongs to the UPF0502 family.

This is UPF0502 protein PFLU_2135 from Pseudomonas fluorescens (strain SBW25).